The primary structure comprises 213 residues: Kynurenine formamidase (213 aa).

Trp18 contacts substrate. Residues His48, His52, and Asp54 each contribute to the Zn(2+) site. Catalysis depends on His58, which acts as the Proton donor/acceptor. His160 and Glu172 together coordinate Zn(2+).

Belongs to the Cyclase 1 superfamily. KynB family. As to quaternary structure, homodimer. Requires Zn(2+) as cofactor.

It catalyses the reaction N-formyl-L-kynurenine + H2O = L-kynurenine + formate + H(+). Its pathway is amino-acid degradation; L-tryptophan degradation via kynurenine pathway; L-kynurenine from L-tryptophan: step 2/2. Catalyzes the hydrolysis of N-formyl-L-kynurenine to L-kynurenine, the second step in the kynurenine pathway of tryptophan degradation. The protein is Kynurenine formamidase of Burkholderia mallei (strain NCTC 10247).